A 130-amino-acid chain; its full sequence is Guanylate kinase (130 aa).

A Guanylate kinase-like domain is found at 1-130 (KIFEDPTTSY…EKIQSRVNEA (130 aa)).

This sequence belongs to the guanylate kinase family.

The protein resides in the cytoplasm. The enzyme catalyses GMP + ATP = GDP + ADP. Essential for recycling GMP and indirectly, cGMP. The chain is Guanylate kinase (gmk) from Staphylococcus epidermidis.